Consider the following 165-residue polypeptide: Nucleotide-binding protein PMN2A_1813 (165 aa).

This sequence belongs to the YajQ family.

Its function is as follows. Nucleotide-binding protein. This chain is Nucleotide-binding protein PMN2A_1813, found in Prochlorococcus marinus (strain NATL2A).